The sequence spans 153 residues: Large ribosomal subunit protein uL15 (153 aa).

Belongs to the universal ribosomal protein uL15 family. Part of the 50S ribosomal subunit.

Binds to the 23S rRNA. The sequence is that of Large ribosomal subunit protein uL15 from Pelagibacter ubique (strain HTCC1062).